Here is a 381-residue protein sequence, read N- to C-terminus: PqqA peptide cyclase (381 aa).

The region spanning 12 to 228 is the Radical SAM core domain; sequence VGPPLWLLAE…AEYRQRLAAE (217 aa). Residues C26, C30, and C33 each coordinate [4Fe-4S] cluster.

Belongs to the radical SAM superfamily. PqqE family. Interacts with PqqD. The interaction is necessary for activity of PqqE. [4Fe-4S] cluster is required as a cofactor.

The enzyme catalyses [PQQ precursor protein] + S-adenosyl-L-methionine = E-Y cross-linked-[PQQ precursor protein] + 5'-deoxyadenosine + L-methionine + H(+). It functions in the pathway cofactor biosynthesis; pyrroloquinoline quinone biosynthesis. Catalyzes the cross-linking of a glutamate residue and a tyrosine residue in the PqqA protein as part of the biosynthesis of pyrroloquinoline quinone (PQQ). This chain is PqqA peptide cyclase, found in Pseudomonas aeruginosa (strain LESB58).